Reading from the N-terminus, the 54-residue chain is Large ribosomal subunit protein bL33 (54 aa).

The protein belongs to the bacterial ribosomal protein bL33 family.

This chain is Large ribosomal subunit protein bL33, found in Legionella pneumophila (strain Lens).